Reading from the N-terminus, the 394-residue chain is Alanine racemase 2 (394 aa).

Lys-39 functions as the Proton acceptor; specific for D-alanine in the catalytic mechanism. An N6-(pyridoxal phosphate)lysine modification is found at Lys-39. Arg-139 provides a ligand contact to substrate. The Proton acceptor; specific for L-alanine role is filled by Tyr-272. Substrate is bound at residue Met-320.

Belongs to the alanine racemase family. Pyridoxal 5'-phosphate is required as a cofactor.

The enzyme catalyses L-alanine = D-alanine. The protein operates within amino-acid biosynthesis; D-alanine biosynthesis; D-alanine from L-alanine: step 1/1. Functionally, catalyzes the interconversion of L-alanine and D-alanine. May also act on other amino acids. This Bacillus subtilis (strain 168) protein is Alanine racemase 2 (alr2).